Reading from the N-terminus, the 279-residue chain is Tryptophan synthase alpha chain (279 aa).

Active-site proton acceptor residues include Glu-50 and Asp-61.

Belongs to the TrpA family. Tetramer of two alpha and two beta chains.

The enzyme catalyses (1S,2R)-1-C-(indol-3-yl)glycerol 3-phosphate + L-serine = D-glyceraldehyde 3-phosphate + L-tryptophan + H2O. The protein operates within amino-acid biosynthesis; L-tryptophan biosynthesis; L-tryptophan from chorismate: step 5/5. Functionally, the alpha subunit is responsible for the aldol cleavage of indoleglycerol phosphate to indole and glyceraldehyde 3-phosphate. The chain is Tryptophan synthase alpha chain from Brucella ovis (strain ATCC 25840 / 63/290 / NCTC 10512).